The primary structure comprises 486 residues: MASLMIQGCGSDVGKSTLVAGLCRLFVNRGLIVRPFKPQNMSNNAAVTEDGGEIGRAQALQAIACRTPPTVHMNPVLLKPQSDVGAQVVVRGKVVGAYQARAFQGLKPDLLATTVESYRLLAAEADLVLVEGAGSPAETNLRAGDIANMGFAHAADVPVALIGDIDRGHVIAALAGAHLVLDAADRERIKGFIINKFRGDPSLFDEGRREIVARTGWPDLGMAPWLASARALPAEDAVALERPVREDGGRRAKIVVPMLSRIANFDEFDPLRADPSLDFSFLPPGTPVPGDADLVILPGTKATLADLTFLRAQGWDIDILAHARRGGRVLGVCGGYQMLGRTVSDPEGVEGAPGSAPGLGLLDVETVLLGDKVLRATAGRLVGTDAAFSGYEMHIGRTTGQGAARPMLAFDGGAADGAVSADGRVAGAYVHGLFERGEARAALLAPLGVAASSGDHAAQVDAALDEIAAVLERSLDIEAIARIAGV.

Positions 251-439 (RAKIVVPMLS…VHGLFERGEA (189 aa)) constitute a GATase cobBQ-type domain. Cysteine 333 serves as the catalytic Nucleophile. Histidine 431 is a catalytic residue.

It belongs to the CobB/CobQ family. CobQ subfamily.

It functions in the pathway cofactor biosynthesis; adenosylcobalamin biosynthesis. Catalyzes amidations at positions B, D, E, and G on adenosylcobyrinic A,C-diamide. NH(2) groups are provided by glutamine, and one molecule of ATP is hydrogenolyzed for each amidation. This is Cobyric acid synthase from Caulobacter sp. (strain K31).